The primary structure comprises 509 residues: Bestrophin-2a (509 aa).

Topologically, residues 1–31 are cytoplasmic; the sequence is MTVTYTARVANARFGGFSQLLLLWRGSIYKL. A10 contributes to the Ca(2+) binding site. The chain crosses the membrane as a helical span at residues 32-51; that stretch reads LWRELLCFLGFYMALSAAYR. Residues 52–60 are Extracellular-facing; that stretch reads FVLTEGQKR. A helical transmembrane segment spans residues 61 to 82; it reads YFEKLVIYCDQYASLIPVSFVL. Over 83–238 the chain is Cytoplasmic; the sequence is GFYVTLVVNR…WISVPLVYTQ (156 aa). A helical transmembrane segment spans residues 239-255; sequence VVTIALYSYFLACLIGR. The Extracellular segment spans residues 256–274; sequence QFLDPAQGYKDHDLDLCVP. Residues 275 to 288 traverse the membrane as a helical segment; the sequence is IFTLLQFFFYAGWL. The Cytoplasmic segment spans residues 289-509; sequence KVAEQLINPF…PIGEEEENLA (221 aa). Q293, N296, D301, and D304 together coordinate Ca(2+). The disordered stretch occupies residues 454-509; the sequence is DPGLPEPEAPPPAGPEPLTLIPGPVEPFSIVTMPGPRGPAPPWLPSPIGEEEENLA. 2 stretches are compositionally biased toward pro residues: residues 457–468 and 489–498; these read LPEPEAPPPAGP and PRGPAPPWLP.

The protein belongs to the anion channel-forming bestrophin (TC 1.A.46) family. Calcium-sensitive chloride channel subfamily. In terms of assembly, pentamer. Interacts with GLUL; this interaction tethers a fraction of GLUL to the membrane, causing a decrease of cytosolic glutamine synthase (GS) activity and inhibits the chloride channel activity of BEST2 by affecting the gating at the aperture in the absence of intracellular glutamate. Mainly confined to the retinal pigment epithelium. Expressed in colon.

Its subcellular location is the cell membrane. The protein localises to the basolateral cell membrane. The catalysed reaction is chloride(in) = chloride(out). It catalyses the reaction hydrogencarbonate(in) = hydrogencarbonate(out). It carries out the reaction L-glutamate(out) = L-glutamate(in). The enzyme catalyses iodide(out) = iodide(in). The catalysed reaction is L-glutamine(out) = L-glutamine(in). With respect to regulation, chloride channel activity is allosterically inhibited by GLUL/glutamine synthase (GS) which affects the gating at the aperture in the absence of intracellular glutamate. Inhibitory effect of GLUL is relieved upon increasing of L-glutamate intracellular level. Functionally, ligand-gated anion channel that allows the movement of anions across cell membranes when activated by calcium (Ca2+). Transports a large specter of anions, namely mediates the movement of chloride, L-glutamate and iodide. Calcium-binding triggers the dilation of the aperture, but calcium-dependent gating is only effective when the size of the passing anion is bigger than the closed aperture. Mediates the calcium-activated hydrogencarbonate movement and participates in colonic hydrogencarbonate secretion concomitant with mucin secretion. In non-pigmented epithelium (NPE), mediates the efflux of intracellular L-glutamate; binding of intracellular L-glutamate activates and open both the neck and the aperture of the channel, leading to L-glutamate exit promoting chloride influx movement from the extracellular side in trans. Also exhibits a directional permeability for intracellular glutamine, in a similar manner as for L-glutamate. This Homo sapiens (Human) protein is Bestrophin-2a.